The chain runs to 359 residues: Phospho-N-acetylmuramoyl-pentapeptide-transferase (359 aa).

10 helical membrane-spanning segments follow: residues Gln-3 to Ile-23, Gly-53 to Ile-73, Gly-84 to Ile-104, Thr-117 to Phe-137, Ile-156 to Ala-176, Leu-187 to Phe-207, Leu-231 to Ala-251, Ile-255 to Thr-275, Val-283 to Phe-303, and Val-330 to Tyr-350.

This sequence belongs to the glycosyltransferase 4 family. MraY subfamily. Mg(2+) is required as a cofactor.

Its subcellular location is the cell membrane. The catalysed reaction is UDP-N-acetyl-alpha-D-muramoyl-L-alanyl-gamma-D-glutamyl-meso-2,6-diaminopimeloyl-D-alanyl-D-alanine + di-trans,octa-cis-undecaprenyl phosphate = di-trans,octa-cis-undecaprenyl diphospho-N-acetyl-alpha-D-muramoyl-L-alanyl-D-glutamyl-meso-2,6-diaminopimeloyl-D-alanyl-D-alanine + UMP. It participates in cell wall biogenesis; peptidoglycan biosynthesis. Functionally, catalyzes the initial step of the lipid cycle reactions in the biosynthesis of the cell wall peptidoglycan: transfers peptidoglycan precursor phospho-MurNAc-pentapeptide from UDP-MurNAc-pentapeptide onto the lipid carrier undecaprenyl phosphate, yielding undecaprenyl-pyrophosphoryl-MurNAc-pentapeptide, known as lipid I. The polypeptide is Phospho-N-acetylmuramoyl-pentapeptide-transferase (Rhodococcus opacus (strain B4)).